Here is a 1423-residue protein sequence, read N- to C-terminus: Protein phosphatase Slingshot homolog 2 (1423 aa).

Disordered regions lie at residues 1-37 (MALV…PRSI) and 51-70 (LPRG…NKHA). A compositionally biased stretch (low complexity) spans 9–18 (SPTPSTTSSP). Phosphoserine is present on residues serine 17, serine 25, and serine 36. Positions 248–303 (ERTERLIKTKLREIMMQKDLENITSKEIRTELEMQMVCNLREFKEFIDNEMIVILG) constitute a DEK-C domain. The Tyrosine-protein phosphatase domain occupies 307–448 (SPTQIFEHVF…LEEYQGILLA (142 aa)). Cysteine 392 acts as the Phosphocysteine intermediate in catalysis. Phosphoserine is present on residues serine 461, serine 487, serine 534, serine 631, and serine 633. Disordered stretches follow at residues 698 to 725 (EMAA…DEDQ), 833 to 858 (HSST…MHSG), 878 to 950 (RQEQ…HCER), 967 to 991 (APQD…QRAV), 1021 to 1042 (SLGH…KQGL), 1074 to 1105 (PQVL…KGDC), and 1207 to 1226 (PEAC…DLSH). Over residues 884-904 (HGTASAGPTLSNRKNSKNDSS) the composition is skewed to polar residues. Composition is skewed to basic and acidic residues over residues 910-932 (PKWK…EPSK), 976-987 (SRSKKQEGDLKK), and 1033-1042 (PSKEGEKQGL). Serine 1217 bears the Phosphoserine mark. The residue at position 1422 (threonine 1422) is a Phosphothreonine.

The protein belongs to the protein-tyrosine phosphatase family. Interacts with filamentous actin. As to expression, expressed in brain, heart, liver, skeletal muscle, testis and thymus. Also expressed at lower levels in kidney, small intestine and spleen. Within testicular seminiferous tubules expressed in germ cells and spermatocytes, where it has a cytoplasmic localization, and round spermatids, where it concentrates in the acrosomal region next to the nucleus.

It is found in the cytoplasm. The protein localises to the cytoskeleton. The protein resides in the cell junction. Its subcellular location is the focal adhesion. It localises to the cytoplasmic vesicle. It is found in the secretory vesicle. The protein localises to the acrosome. It carries out the reaction O-phospho-L-tyrosyl-[protein] + H2O = L-tyrosyl-[protein] + phosphate. The catalysed reaction is O-phospho-L-seryl-[protein] + H2O = L-seryl-[protein] + phosphate. The enzyme catalyses O-phospho-L-threonyl-[protein] + H2O = L-threonyl-[protein] + phosphate. Its function is as follows. Protein phosphatase which regulates actin filament dynamics. Dephosphorylates and activates the actin binding/depolymerizing factor cofilin, which subsequently binds to actin filaments and stimulates their disassembly. Inhibitory phosphorylation of cofilin is mediated by LIMK1, which may also be dephosphorylated and inactivated by this protein. Required for spermatogenesis. Involved in acrosome biogenesis, probably by regulating cofilin-mediated actin cytoskeleton remodeling during proacrosomal vesicle fusion and/or Golgi to perinuclear vesicle trafficking. In Mus musculus (Mouse), this protein is Protein phosphatase Slingshot homolog 2 (Ssh2).